A 245-amino-acid polypeptide reads, in one-letter code: Ribonuclease 3 (245 aa).

The RNase III domain maps to 18–146 (LSEFLENLSI…FVGAIYLDSG (129 aa)). Glutamate 59 provides a ligand contact to Mg(2+). Aspartate 63 is a catalytic residue. Residues aspartate 132 and glutamate 135 each coordinate Mg(2+). Residue glutamate 135 is part of the active site. In terms of domain architecture, DRBM spans 173–242 (DYKSLLQEYV…AEVALKAMED (70 aa)).

The protein belongs to the ribonuclease III family. Homodimer. Requires Mg(2+) as cofactor.

It is found in the cytoplasm. The enzyme catalyses Endonucleolytic cleavage to 5'-phosphomonoester.. In terms of biological role, digests double-stranded RNA. Involved in the processing of primary rRNA transcript to yield the immediate precursors to the large and small rRNAs (23S and 16S). Processes some mRNAs, and tRNAs when they are encoded in the rRNA operon. Processes pre-crRNA and tracrRNA of type II CRISPR loci if present in the organism. The sequence is that of Ribonuclease 3 from Borreliella afzelii (strain PKo) (Borrelia afzelii).